A 464-amino-acid chain; its full sequence is tRNA modification GTPase MnmE (464 aa).

3 residues coordinate (6S)-5-formyl-5,6,7,8-tetrahydrofolate: Arg-25, Glu-87, and Lys-130. Positions 226–386 constitute a TrmE-type G domain; the sequence is GLSVVLAGQP…LREELLRIAG (161 aa). Position 236 (Asn-236) interacts with K(+). GTP is bound by residues 236–241, 255–261, and 280–283; these read NVGKSS, TPIAGTT, and DTAG. Ser-240 lines the Mg(2+) pocket. The K(+) site is built by Thr-255, Ile-257, and Thr-260. Thr-261 is a Mg(2+) binding site. Residue Lys-464 coordinates (6S)-5-formyl-5,6,7,8-tetrahydrofolate.

The protein belongs to the TRAFAC class TrmE-Era-EngA-EngB-Septin-like GTPase superfamily. TrmE GTPase family. In terms of assembly, homodimer. Heterotetramer of two MnmE and two MnmG subunits. Requires K(+) as cofactor.

The protein localises to the cytoplasm. Exhibits a very high intrinsic GTPase hydrolysis rate. Involved in the addition of a carboxymethylaminomethyl (cmnm) group at the wobble position (U34) of certain tRNAs, forming tRNA-cmnm(5)s(2)U34. The protein is tRNA modification GTPase MnmE of Paraburkholderia xenovorans (strain LB400).